We begin with the raw amino-acid sequence, 196 residues long: uncharacterized protein (196 aa).

The span at 21-35 shows a compositional bias: basic and acidic residues; sequence ESRRKDGSVRRERAV. Disordered regions lie at residues 21–53 and 65–196; these read ESRRKDGSVRRERAVKPGYTAPEDIKRYRPGRG and LQLS…KEKE. Polar residues predominate over residues 66 to 75; sequence QLSNDASTSK. Basic and acidic residues-rich tracts occupy residues 84–94, 100–143, and 173–196; these read ELEKEKLERPL, EKND…KDFK, and KMSKRENKKSINTVDKKTGYKEKE.

This is an uncharacterized protein from Schizosaccharomyces pombe (strain 972 / ATCC 24843) (Fission yeast).